We begin with the raw amino-acid sequence, 91 residues long: Acylphosphatase (91 aa).

The Acylphosphatase-like domain occupies 3–89 (TLLVRISGKV…PDQPGFSQKP (87 aa)). Residues R18 and N36 contribute to the active site.

The protein belongs to the acylphosphatase family.

The enzyme catalyses an acyl phosphate + H2O = a carboxylate + phosphate + H(+). In Rhodospirillum rubrum (strain ATCC 11170 / ATH 1.1.1 / DSM 467 / LMG 4362 / NCIMB 8255 / S1), this protein is Acylphosphatase (acyP).